The sequence spans 289 residues: Metal-staphylopine import system permease protein CntC (289 aa).

5 helical membrane passes run 13 to 33 (AVIA…APLV), 77 to 97 (LLYV…LGFL), 115 to 135 (VMLA…FGMG), 194 to 214 (IAII…GFSF), and 249 to 269 (IAIV…QIAI). Positions 73 to 262 (IRPSLLYVFV…IIVMAFNFLS (190 aa)) constitute an ABC transmembrane type-1 domain.

This sequence belongs to the binding-protein-dependent transport system permease family. The complex is composed of two ATP-binding proteins (CntD and CntF), two transmembrane proteins (CntB and CntC) and a solute-binding protein (CntA).

The protein localises to the cell membrane. Nickel/cobalt import is reduced in the presence of zinc. In terms of biological role, part of the ABC transporter complex CntABCDF (Opp1) involved in the uptake of metal in complex with the metallophore staphylopine (StP). Involved in the import of divalent metals ions such as nickel, cobalt and zinc. Probably responsible for the translocation of the substrate across the membrane. Plays a major role in nickel/cobalt import in zinc-depleted conditions. Contributes to virulence. Required for full urease activity in vitro. The sequence is that of Metal-staphylopine import system permease protein CntC from Staphylococcus aureus (strain NCTC 8325 / PS 47).